The following is a 101-amino-acid chain: MDKPKRLFLKSKRSFRRRLPPIGSGDRIDYRNMSLISRFISEQGKILSRRVNRLTLKQQRLITIAIKQARILSSLPFLNNEKQFERAESTPRTPGPRTRNK.

The interval 82–101 is disordered; that stretch reads KQFERAESTPRTPGPRTRNK.

This sequence belongs to the bacterial ribosomal protein bS18 family. In terms of assembly, part of the 30S ribosomal subunit.

The protein localises to the plastid. It localises to the chloroplast. The sequence is that of Small ribosomal subunit protein bS18c from Platanus occidentalis (Sycamore).